The chain runs to 105 residues: Large ribosomal subunit protein eL36 (105 aa).

Residues 1-36 are disordered; it reads MAQERSGIAVGLNKGHKTTPLNTPKTRISRSKGKAS. The span at 27–36 shows a compositional bias: basic residues; the sequence is RISRSKGKAS.

The protein belongs to the eukaryotic ribosomal protein eL36 family. As to quaternary structure, component of the large ribosomal subunit (LSU).

The protein resides in the cytoplasm. Functionally, component of the ribosome, a large ribonucleoprotein complex responsible for the synthesis of proteins in the cell. The small ribosomal subunit (SSU) binds messenger RNAs (mRNAs) and translates the encoded message by selecting cognate aminoacyl-transfer RNA (tRNA) molecules. The large subunit (LSU) contains the ribosomal catalytic site termed the peptidyl transferase center (PTC), which catalyzes the formation of peptide bonds, thereby polymerizing the amino acids delivered by tRNAs into a polypeptide chain. The nascent polypeptides leave the ribosome through a tunnel in the LSU and interact with protein factors that function in enzymatic processing, targeting, and the membrane insertion of nascent chains at the exit of the ribosomal tunnel. This Emericella nidulans (strain FGSC A4 / ATCC 38163 / CBS 112.46 / NRRL 194 / M139) (Aspergillus nidulans) protein is Large ribosomal subunit protein eL36.